Reading from the N-terminus, the 264-residue chain is Probable BRI1 kinase inhibitor 1 (264 aa).

Disordered regions lie at residues 1–146 and 165–240; these read MTMN…GLDV and FSRH…SEES. Residues 9–30 show a composition bias toward pro residues; it reads RSQPPPPHPPLFKPTTPPPPPL. Residues 31–40 show a composition bias toward low complexity; it reads LSTSTSTSPP. The span at 77–97 shows a compositional bias: polar residues; sequence LSHNNYSSKANQHRQTGSSSS. The span at 98–107 shows a compositional bias: basic and acidic residues; that stretch reads SKEKDREYKA. 2 stretches are compositionally biased toward low complexity: residues 208–219 and 227–239; these read LSSAPASLRASP and VGGS…SSEE.

Interacts with BRI1. Phosphorylated by BRI1.

Functionally, negative regulator of brassinosteroid signaling. This Oryza sativa subsp. japonica (Rice) protein is Probable BRI1 kinase inhibitor 1 (BKI1).